The sequence spans 184 residues: Endoribonuclease YbeY (184 aa).

3 residues coordinate Zn(2+): His146, His150, and His156.

The protein belongs to the endoribonuclease YbeY family. The cofactor is Zn(2+).

It is found in the cytoplasm. Functionally, single strand-specific metallo-endoribonuclease involved in late-stage 70S ribosome quality control and in maturation of the 3' terminus of the 16S rRNA. The polypeptide is Endoribonuclease YbeY (Nostoc sp. (strain PCC 7120 / SAG 25.82 / UTEX 2576)).